A 465-amino-acid polypeptide reads, in one-letter code: Ribosomal oxygenase 2 (465 aa).

The 133-residue stretch at 139 to 271 (QPQRFKDELW…NSWGDFLLDT (133 aa)) folds into the JmjC domain. Fe cation contacts are provided by histidine 179, aspartate 181, and histidine 240. A Phosphoserine modification is found at serine 309.

The protein belongs to the ROX family. MINA53 subfamily. The cofactor is Fe(2+). Expressed in liver, skeletal muscle, heart, pancreas, and placenta. Not detected in brain, lung or kidney. Expressed in several lung cancer tissues, but is barely detected in the adjacent non-cancerous tissues. Also highly expressed in several esophageal squamous cell carcinoma (ESCC), and colon cancer tissues, and in various cancer cell lines.

The protein localises to the nucleus. It is found in the nucleolus. The enzyme catalyses L-histidyl-[protein] + 2-oxoglutarate + O2 = (3S)-3-hydroxy-L-histidyl-[protein] + succinate + CO2. It carries out the reaction L-histidyl-[ribosomal protein uL15] + 2-oxoglutarate + O2 = (3S)-3-hydroxy-L-histidyl-[ribosomal protein uL15] + succinate + CO2. Functionally, oxygenase that can act as both a histone lysine demethylase and a ribosomal histidine hydroxylase. Is involved in the demethylation of trimethylated 'Lys-9' on histone H3 (H3K9me3), leading to an increase in ribosomal RNA expression. Also catalyzes the hydroxylation of 60S ribosomal protein L27a on 'His-39'. May play an important role in cell growth and survival. May be involved in ribosome biogenesis, most likely during the assembly process of pre-ribosomal particles. This chain is Ribosomal oxygenase 2, found in Homo sapiens (Human).